The primary structure comprises 51 residues: Large ribosomal subunit protein eL39 (51 aa).

The segment at 1 to 22 (MAAQKSFRIKQKMAKAKKQNRP) is disordered. The span at 7-20 (FRIKQKMAKAKKQN) shows a compositional bias: basic residues.

It belongs to the eukaryotic ribosomal protein eL39 family. As to quaternary structure, component of the large ribosomal subunit (LSU). Mature yeast ribosomes consist of a small (40S) and a large (60S) subunit. The 40S small subunit contains 1 molecule of ribosomal RNA (18S rRNA) and 33 different proteins (encoded by 57 genes). The large 60S subunit contains 3 rRNA molecules (25S, 5.8S and 5S rRNA) and 46 different proteins (encoded by 81 genes). eL39 interacts with YIH1.

Its subcellular location is the cytoplasm. Functionally, component of the ribosome, a large ribonucleoprotein complex responsible for the synthesis of proteins in the cell. The small ribosomal subunit (SSU) binds messenger RNAs (mRNAs) and translates the encoded message by selecting cognate aminoacyl-transfer RNA (tRNA) molecules. The large subunit (LSU) contains the ribosomal catalytic site termed the peptidyl transferase center (PTC), which catalyzes the formation of peptide bonds, thereby polymerizing the amino acids delivered by tRNAs into a polypeptide chain. The nascent polypeptides leave the ribosome through a tunnel in the LSU and interact with protein factors that function in enzymatic processing, targeting, and the membrane insertion of nascent chains at the exit of the ribosomal tunnel. In Saccharomyces cerevisiae (strain ATCC 204508 / S288c) (Baker's yeast), this protein is Large ribosomal subunit protein eL39.